The sequence spans 378 residues: O-methyltransferase gsfD (378 aa).

Residues 219 to 220, D244, 266 to 267, and R282 contribute to the S-adenosyl-L-methionine site; these read GG and DM. The Proton acceptor role is filled by H286.

The protein belongs to the class I-like SAM-binding methyltransferase superfamily. Cation-independent O-methyltransferase family.

It catalyses the reaction desmethyl-dehydrogriseofulvin + S-adenosyl-L-methionine = dehydrogriseofulvin + S-adenosyl-L-homocysteine + H(+). It participates in secondary metabolite biosynthesis; terpenoid biosynthesis. Functionally, O-methyltransferase; part of the gene cluster that mediates the biosynthesis of griseofulvin, an important antifungal drug that has been in use for a long time for treating dermatophyte infections. The first step of the pathway is the formation of the heptaketide backbone by gsfA which is initiated by priming with acetyl-CoA, followed by sequential condensations of 6 malonyl-CoA units. The resulting benzophenone can undergo a spontaneous dehydration to form norlichexanthone. However, the true precursor for the griseofulvin biosynthesis is not norlichexanthone, but the heptaketide benzophenone that is O-methylated at 3-OH by gsfB to produce griseophenone D which is further methylated at 9-OH by gsfC to yield griseophenone C. Griseophenone C is then substrate of halogenase gsfI which is responsible for the regio-specific chlorination at the C13 position to form griseophenone B. The cytochrome P450 gsfF catalyzes the coupling of orcinol and phloroglucinol rings in griseophenone B to form desmethyl-dehydrogriseofulvin A which is further methylated at 5-OH by gsfD to yield dehydrogriseofulvin. Finally, gsfE performs stereospecific reduction of enone 18 of dehydrogriseofulvin to afford the final product griseofulvin. This chain is O-methyltransferase gsfD, found in Penicillium aethiopicum.